A 675-amino-acid polypeptide reads, in one-letter code: PTS system glucose-specific EIICBA component (675 aa).

The PTS EIIC type-1 domain occupies 3–414; that stretch reads KKLFGQMQRI…FNYKTPGRED (412 aa). The next 11 membrane-spanning stretches (helical) occupy residues 16 to 36, 59 to 79, 81 to 101, 126 to 146, 170 to 190, 211 to 231, 273 to 293, 303 to 323, 328 to 348, 355 to 375, and 378 to 398; these read LMLP…GTAF, MLTG…ALGV, IGLA…FIIL, VLGI…GALA, FVPI…AIIW, LAVF…LHHI, FMQG…LAIY, VVAG…ITEP, FLFV…LSFL, VHLG…GILP, and TAWW…YFVF. One can recognise a PTS EIIB type-1 domain in the interval 425 to 506; the sequence is SQLPFDVLKA…AKIISGEITK (82 aa). The Phosphocysteine intermediate; for EIIB activity role is filled by cysteine 447. Positions 547-651 constitute a PTS EIIA type-1 domain; the sequence is DKVFSEKMMG…SIITPVIITN (105 aa). Histidine 599 functions as the Tele-phosphohistidine intermediate; for EIIA activity in the catalytic mechanism.

It localises to the cell membrane. The enzyme catalyses N(pros)-phospho-L-histidyl-[protein] + D-glucose(out) = D-glucose 6-phosphate(in) + L-histidyl-[protein]. Its function is as follows. The phosphoenolpyruvate-dependent sugar phosphotransferase system (sugar PTS), a major carbohydrate active transport system, catalyzes the phosphorylation of incoming sugar substrates concomitantly with their translocation across the cell membrane. This system is involved in glucose transport. This chain is PTS system glucose-specific EIICBA component (ptsG), found in Staphylococcus epidermidis.